We begin with the raw amino-acid sequence, 624 residues long: Ubiquilin-2 (624 aa).

Disordered stretches follow at residues Met-1–Ile-32 and Asn-106–Asn-141. Residue Ala-2 is modified to N-acetylalanine. Over residues Arg-15–Ile-32 the composition is skewed to low complexity. The region spanning Ile-33–Arg-107 is the Ubiquitin-like domain. A compositionally biased stretch (polar residues) spans Asn-106–Pro-115. Over residues Ser-116 to Asn-141 the composition is skewed to low complexity. 2 consecutive STI1 domains span residues Ser-178–Met-206 and Asn-208–Met-247. The interval Phe-287–Ala-349 is disordered. Residues Ser-294 to Gly-304 are compositionally biased toward low complexity. Residues Leu-316–Ala-325 are compositionally biased toward pro residues. Residues Thr-326–Ala-349 are compositionally biased toward low complexity. STI1 domains are found at residues Asn-379 to Met-426 and Leu-430 to Leu-462. 12 tandem repeats follow at residues Pro-491 to Gly-493, Pro-494 to Thr-496, Pro-497 to Gly-499, Pro-500 to Gly-502, Pro-503 to Val-505, Pro-506 to Thr-508, Pro-509 to Gly-511, Pro-512 to Gly-514, Pro-515 to Gly-517, Pro-518 to Gly-520, Pro-521 to Ala-523, and Pro-524 to Gly-526. The interval Pro-491 to Gly-526 is 12 X 3 AA tandem repeats of P-X-X. Positions Pro-512 to Asn-556 are disordered. Residues Gly-535 to Ser-553 are compositionally biased toward low complexity. A UBA domain is found at Arg-581–Ser-621.

Homodimer. Forms heterodimer with UBQLN1. Binds UBE3A and BTRC. Interacts with the 19S proteasome subunit. Interacts with C9orf72. Interacts with HNRNPA1 and HNRNPU. Found in a complex with UBQLN1 and MAP1LC3A/B/C. Interacts with EPS15, EPN1 and EPN2. Interacts with HERPUD1. Interacts with RAD23A. Interacts with TARDBP. Interacts (via C-terminus) with FAF2 (via N-terminus). Interacts with UBQLN4. Binds CD47. In terms of processing, degraded during macroautophagy.

Its subcellular location is the cytoplasm. The protein resides in the nucleus. It localises to the membrane. The protein localises to the cytoplasmic vesicle. It is found in the autophagosome. Plays an important role in the regulation of different protein degradation mechanisms and pathways including ubiquitin-proteasome system (UPS), autophagy and the endoplasmic reticulum-associated protein degradation (ERAD) pathway. Mediates the proteasomal targeting of misfolded or accumulated proteins for degradation by binding (via UBA domain) to their polyubiquitin chains and by interacting (via ubiquitin-like domain) with the subunits of the proteasome. Plays a role in the ERAD pathway via its interaction with ER-localized proteins FAF2/UBXD8 and HERPUD1 and may form a link between the polyubiquitinated ERAD substrates and the proteasome. Involved in the regulation of macroautophagy and autophagosome formation; required for maturation of autophagy-related protein LC3 from the cytosolic form LC3-I to the membrane-bound form LC3-II and may assist in the maturation of autophagosomes to autolysosomes by mediating autophagosome-lysosome fusion. Negatively regulates the endocytosis of GPCR receptors: AVPR2 and ADRB2, by specifically reducing the rate at which receptor-arrestin complexes concentrate in clathrin-coated pits (CCPs). The protein is Ubiquilin-2 (UBQLN2) of Homo sapiens (Human).